A 476-amino-acid polypeptide reads, in one-letter code: Bifunctional protein HldE (476 aa).

Positions 1 to 318 (MAQYSAEFKQ…ENAIHARPET (318 aa)) are ribokinase. 195 to 198 (NMSE) lines the ATP pocket. Aspartate 264 is an active-site residue. The cytidylyltransferase stretch occupies residues 344-476 (MTNGCFDILH…VIEKIKLLKD (133 aa)).

It in the N-terminal section; belongs to the carbohydrate kinase PfkB family. This sequence in the C-terminal section; belongs to the cytidylyltransferase family. In terms of assembly, homodimer.

It carries out the reaction D-glycero-beta-D-manno-heptose 7-phosphate + ATP = D-glycero-beta-D-manno-heptose 1,7-bisphosphate + ADP + H(+). It catalyses the reaction D-glycero-beta-D-manno-heptose 1-phosphate + ATP + H(+) = ADP-D-glycero-beta-D-manno-heptose + diphosphate. It functions in the pathway nucleotide-sugar biosynthesis; ADP-L-glycero-beta-D-manno-heptose biosynthesis; ADP-L-glycero-beta-D-manno-heptose from D-glycero-beta-D-manno-heptose 7-phosphate: step 1/4. It participates in nucleotide-sugar biosynthesis; ADP-L-glycero-beta-D-manno-heptose biosynthesis; ADP-L-glycero-beta-D-manno-heptose from D-glycero-beta-D-manno-heptose 7-phosphate: step 3/4. Functionally, catalyzes the phosphorylation of D-glycero-D-manno-heptose 7-phosphate at the C-1 position to selectively form D-glycero-beta-D-manno-heptose-1,7-bisphosphate. In terms of biological role, catalyzes the ADP transfer from ATP to D-glycero-beta-D-manno-heptose 1-phosphate, yielding ADP-D-glycero-beta-D-manno-heptose. The protein is Bifunctional protein HldE of Haemophilus influenzae (strain 86-028NP).